Reading from the N-terminus, the 183-residue chain is NADH-quinone oxidoreductase subunit I (183 aa).

2 consecutive 4Fe-4S ferredoxin-type domains span residues 44-74 (LNRW…VEAG) and 90-119 (RVYQ…MTNE). The [4Fe-4S] cluster site is built by Cys-54, Cys-57, Cys-60, Cys-64, Cys-99, Cys-102, Cys-105, and Cys-109. A disordered region spans residues 143–183 (QGMEAPPHPMRLGETEKDYYRLGRDDNAAARADEQNSEAVQ). The segment covering 153 to 176 (RLGETEKDYYRLGRDDNAAARADE) has biased composition (basic and acidic residues).

Belongs to the complex I 23 kDa subunit family. In terms of assembly, NDH-1 is composed of 14 different subunits. Subunits NuoA, H, J, K, L, M, N constitute the membrane sector of the complex. Requires [4Fe-4S] cluster as cofactor.

The protein localises to the cell membrane. The catalysed reaction is a quinone + NADH + 5 H(+)(in) = a quinol + NAD(+) + 4 H(+)(out). Its function is as follows. NDH-1 shuttles electrons from NADH, via FMN and iron-sulfur (Fe-S) centers, to quinones in the respiratory chain. The immediate electron acceptor for the enzyme in this species is believed to be ubiquinone. Couples the redox reaction to proton translocation (for every two electrons transferred, four hydrogen ions are translocated across the cytoplasmic membrane), and thus conserves the redox energy in a proton gradient. This is NADH-quinone oxidoreductase subunit I from Thermobifida fusca (strain YX).